Here is a 244-residue protein sequence, read N- to C-terminus: Ureidoacrylate amidohydrolase RutB (244 aa).

The Proton acceptor role is filled by Asp-38. Lys-147 is a catalytic residue. The active-site Nucleophile is Cys-180.

Belongs to the isochorismatase family. RutB subfamily.

It carries out the reaction (Z)-3-ureidoacrylate + H2O + H(+) = (Z)-3-aminoacrylate + NH4(+) + CO2. It catalyses the reaction (Z)-3-ureidoacrylate + H2O = (Z)-3-aminoacrylate + carbamate + H(+). The catalysed reaction is (Z)-2-methylureidoacrylate + H2O + H(+) = (Z)-2-methylaminoacrylate + NH4(+) + CO2. Functionally, hydrolyzes ureidoacrylate to form aminoacrylate and carbamate. The carbamate hydrolyzes spontaneously, thereby releasing one of the nitrogen atoms of the pyrimidine ring as ammonia and one of its carbon atoms as CO2. In Shigella sonnei (strain Ss046), this protein is Ureidoacrylate amidohydrolase RutB.